The chain runs to 212 residues: MEITCPDWTHETAALAEGFTCVVGVDEVGRGPLAGPVTAAAVRLFPGRIPEGLNDSKKLTAPRREMLAAEIHTVAEVSIAHASVEEIDRLNILQASHLAMGRALAGLPSRPDFALIDGHMVPKGLGHRCRAIVKGDALCLSIAAASIVAKVARDRIMVDLEQQHPGYGWRTNAGYGTKDHLQALLNLGPTPHHRRSFKPVHNILYQEASISP.

The RNase H type-2 domain maps to 20–209 (TCVVGVDEVG…VHNILYQEAS (190 aa)). 3 residues coordinate a divalent metal cation: aspartate 26, glutamate 27, and aspartate 117.

The protein belongs to the RNase HII family. Requires Mn(2+) as cofactor. Mg(2+) is required as a cofactor.

It is found in the cytoplasm. The enzyme catalyses Endonucleolytic cleavage to 5'-phosphomonoester.. Endonuclease that specifically degrades the RNA of RNA-DNA hybrids. The polypeptide is Ribonuclease HII (Cereibacter sphaeroides (strain ATCC 17023 / DSM 158 / JCM 6121 / CCUG 31486 / LMG 2827 / NBRC 12203 / NCIMB 8253 / ATH 2.4.1.) (Rhodobacter sphaeroides)).